The primary structure comprises 473 residues: MGRKKIQITRIMDERNRQVTFTKRKFGLMKKAYELSVLCDCEIALIIFNSTNKLFQYASTDMDKVLLKYTEYNEPHESRTNSDIVETLRKKGLNGCDSPDPDADDSVGHSPESEDKYRKINEDIDLMISRQRLCAVPPPNFEMPVTIPVSSHNSLVYSNPVSSLGNPNLLPLAHPSLQRNSMSPGVTHRPPSAGNTGGLMGGDLTSGAGTSAGNGYGNPRNSPGLLVSPGNLNKNIQAKSPPPMNLGMNNRKPDLRVLIPPGSKNTMPSVSEDVDLLLNQRINNSQSAQSLATPVVSVATPTLPGQGMGGYPSAISTTYGTEYSLSSADLSSLSGFNTASALHLGSVTGWQQQHLHNMPPSALSQLGACTSTHLSQSSNLSLPSTQSLNIKSEPVSPPRDRTTTPSRYPQHTRHEAGRSPVDSLSSCSSSYDGSDREDHRNEFHSPIGLTRPSPDERESPSVKRMRLSEGWAT.

In terms of domain architecture, MADS-box spans 1–61 (MGRKKIQITR…NKLFQYASTD (61 aa)). Residue Lys4 is modified to N6-acetyllysine. Residues 58–86 (ASTDMDKVLLKYTEYNEPHESRTNSDIVE) constitute a DNA-binding region (mef2-type). Ser59 is modified (phosphoserine; by CK2). Residues 91–116 (KGLNGCDSPDPDADDSVGHSPESEDK) are disordered. Residues Ser98, Ser106, and Ser110 each carry the phosphoserine modification. An N6-acetyllysine mark is found at Lys116 and Lys119. The tract at residues 180-206 (NSMSPGVTHRPPSAGNTGGLMGGDLTS) is disordered. Residues Ser222 and Ser228 each carry the phosphoserine modification. N6-acetyllysine is present on residues Lys234 and Lys239. Ser240 bears the Phosphoserine mark. An N6-acetyllysine mark is found at Lys252 and Lys264. Residues 271–278 (SEDVDLLL) are beta domain. A phosphothreonine; by MAPK14 mark is found at Thr293 and Thr300. Residues 368–399 (ACTSTHLSQSSNLSLPSTQSLNIKSEPVSPPR) form a transcription repressor region. Residues 375-390 (SQSSNLSLPSTQSLNI) show a composition bias toward polar residues. The disordered stretch occupies residues 375–473 (SQSSNLSLPS…RMRLSEGWAT (99 aa)). Residue Lys391 forms a Glycyl lysine isopeptide (Lys-Gly) (interchain with G-Cter in SUMO) linkage. Phosphoserine; by CDK5 is present on Ser396. Ser419 carries the phosphoserine; by MAPK7 modification. Positions 419–432 (SPVDSLSSCSSSYD) are enriched in low complexity. Basic and acidic residues predominate over residues 433 to 443 (GSDREDHRNEF). At Ser445 the chain carries Phosphoserine.

Belongs to the MEF2 family. In terms of assembly, forms a complex with class II HDACs in undifferentiating cells. On myogenic differentiation, HDACs are released into the cytoplasm allowing MEF2s to interact with other proteins for activation. Interacts with EP300 in differentiating cells; the interaction acetylates MEF2C leading to increased DNA binding and activation. Interacts with HDAC7 and CARM1. Interacts with HDAC4 and HDAC9; the interaction with HDACs represses transcriptional activity. Interacts with LPIN1. Interacts with MYOCD. Interacts with AKAP13. Interacts with FOXK1; the interaction inhibits MEF2C transactivation activity. Interacts (via N-terminus) with HABP4; this interaction decreases DNA-binding activity of MEF2C in myocardial cells in response to mechanical stress. Interacts with JPH2; interaction specifically takes place with the Junctophilin-2 N-terminal fragment cleavage product of JPH2. Interacts (via MADS box) with SOX18. Interacts with PHF7; the interaction promotes MEF2C binding to its transcription targets. Phosphorylated on Ser-59; which enhances DNA binding activity. Phosphorylated on Ser-396; which is required for Lys-391 sumoylation and inhibits transcriptional activity. In terms of processing, acetylated by p300 on several sites in diffentiating myocytes. Acetylation on Lys-4 increases DNA binding and transactivation. Post-translationally, sumoylated on Lys-391 with SUMO2 but not SUMO1; which represses transcriptional activity. Proteolytically cleaved in cerebellar granule neurons on several sites by caspase 3 and caspase 7 following neurotoxicity. Preferentially cleaves the CDK5-mediated hyperphosphorylated form which leads to neuron apoptosis and transcriptional inactivation. In terms of tissue distribution, expressed in the heart. Expressed in cardiac myocytes (at protein level).

The protein localises to the nucleus. It localises to the cytoplasm. The protein resides in the sarcoplasm. Its function is as follows. Transcription activator which binds specifically to the MEF2 element present in the regulatory regions of many muscle-specific genes. Controls cardiac morphogenesis and myogenesis, and is also involved in vascular development. Enhances transcriptional activation mediated by SOX18. Plays an essential role in hippocampal-dependent learning and memory by suppressing the number of excitatory synapses and thus regulating basal and evoked synaptic transmission. Crucial for normal neuronal development, distribution, and electrical activity in the neocortex. Necessary for proper development of megakaryocytes and platelets and for bone marrow B-lymphopoiesis. Required for B-cell survival and proliferation in response to BCR stimulation, efficient IgG1 antibody responses to T-cell-dependent antigens and for normal induction of germinal center B-cells. May also be involved in neurogenesis and in the development of cortical architecture. This chain is Myocyte-specific enhancer factor 2C, found in Rattus norvegicus (Rat).